We begin with the raw amino-acid sequence, 266 residues long: NADP-dependent mannitol dehydrogenase (266 aa).

Positions 107 and 140 each coordinate NADP(+). S159 (proton donor) is an active-site residue. NADP(+) contacts are provided by Y174, K178, I206, and T208. The active-site Proton acceptor is Y174. K178 (lowers pKa of active site Tyr) is an active-site residue.

This sequence belongs to the short-chain dehydrogenases/reductases (SDR) family. In terms of assembly, homotetramer.

It catalyses the reaction D-mannitol + NADP(+) = D-fructose + NADPH + H(+). Its function is as follows. Catalyzes the interconversion between D-mannitol and D-fructose. Plays a key role in liamocins biosynthesis by providing the mannitol moity that is linked to 3,5-dihydroxydecanoic acid (provided by the HR-PKS PKS1) via ester bond formation catalyzed by the esterase EST1. This Aureobasidium melanogenum (Aureobasidium pullulans var. melanogenum) protein is NADP-dependent mannitol dehydrogenase.